Consider the following 240-residue polypeptide: Lipoprotein-releasing system ATP-binding protein LolD (240 aa).

In terms of domain architecture, ABC transporter spans isoleucine 15–valine 240. Glycine 51–serine 58 is a binding site for ATP.

It belongs to the ABC transporter superfamily. Lipoprotein translocase (TC 3.A.1.125) family. As to quaternary structure, the complex is composed of two ATP-binding proteins (LolD) and two transmembrane proteins (LolC and LolE).

It localises to the cell inner membrane. In terms of biological role, part of the ABC transporter complex LolCDE involved in the translocation of mature outer membrane-directed lipoproteins, from the inner membrane to the periplasmic chaperone, LolA. Responsible for the formation of the LolA-lipoprotein complex in an ATP-dependent manner. This chain is Lipoprotein-releasing system ATP-binding protein LolD, found in Xylella fastidiosa (strain 9a5c).